Reading from the N-terminus, the 63-residue chain is Large ribosomal subunit protein bL28 (63 aa).

Belongs to the bacterial ribosomal protein bL28 family.

This chain is Large ribosomal subunit protein bL28, found in Clostridium perfringens (strain ATCC 13124 / DSM 756 / JCM 1290 / NCIMB 6125 / NCTC 8237 / Type A).